Reading from the N-terminus, the 194-residue chain is Auxin-induced protein 22A (194 aa).

Positions 13–17 (LRLGL) match the EAR-like (transcriptional repression) motif. The segment at 40 to 62 (EIDDVGDENSSSGGGGDRKMENK) is disordered. The PB1 domain maps to 85–173 (KMYVKVSMDG…KRLRIMKRAD (89 aa)).

The protein belongs to the Aux/IAA family. As to quaternary structure, homodimers and heterodimers.

The protein localises to the nucleus. Aux/IAA proteins are short-lived transcriptional factors that function as repressors of early auxin response genes at low auxin concentrations. Repression is thought to result from the interaction with auxin response factors (ARFs), proteins that bind to the auxin-responsive promoter element (AuxRE). Formation of heterodimers with ARF proteins may alter their ability to modulate early auxin response genes expression. This Vigna radiata var. radiata (Mung bean) protein is Auxin-induced protein 22A (AUX22A).